Consider the following 985-residue polypeptide: MPSAGQRKPGSLLALQALQKWLLRGGVGAMLARQVVAALLLWLSCCVSALWRYYINSQDYSIFSTRSSIKLEYEGNSFVSWKIPESCKVENTTSPKTTLHCKRAGIHTIKPIAGNQEVERHLTVDNSYICYLWYFTVVDVYYNLSQIVTIWVYDPESASTEELIWTAKKPSLSSRVLTKQMNTLGQRPFIFTVEKRLTYHPGPLTSEGTWVIHLPMSSDDIAKVIRGNKVAFQDCFIANLYFMLTYPMTIISEPPGYEPLTVPPGSPLMLSWDTCISTFALLATDQETFQTNDSFQTWTRVRAPPGILSDAQRHSLRDVIIFDQGTLFLVDGTVYLRTEDEFTKLDESRGISETGILGFSKRRWCQIRYLYKLASKKSILIAWSKTTVYAGYATFRFVTLTDTAKLKDFLKLPQTDTLEVMSVEYLWHPLEAAVLLSHCSVCTTNTRNIRIVIYSAIFQTWTLQDFELQLPKEAILEFRFLYSAMPDIIMWDQHHVYYSYKNFTVVGTISTPSGETNLSSLSQGSKIHQVLTDRIGNVVVKMENNVMFYIKADITEAVILHTWVNTTAKTVVLFDKSFEVCILYYNENLDEKYQLQTQPYPLILELQSINKDLGDWCPYLAFQHNIHSQFYHMDKGESLTIWSQIVYPENRGLYIVVEHYGSSVMTWTQNLEYEIASGFCTKTMITRFFQTTNYELVDNYYQLQKENTGLMLLQFRPSEFSRTCLTAKPVFEIDVGCDSSKYIMVRGFNKSRCQRRDFSYVIDKELLRESLSDNLKVRYDVAKYGCPLTLELGQMFQPIVELYDENGFIKIVDANFILWEIHGRNDYTFNSTMEQNGCINEAQTWDSMIEENPDIPLDDVWGPQNYRPCFSYAIGKPGDLGQPYEILNYSNKNHIKWPMTYAGMYVYRLKILDPNYSFCNLTTIFAIESLGMIPRSSVYLVAALIFVLMLTFISILVLSYFWYLKIYRQFIIEPLHKRPAKQKKN.

A signal peptide spans 1–35; sequence MPSAGQRKPGSLLALQALQKWLLRGGVGAMLARQV. Over 36–937 the chain is Extracellular; the sequence is VAALLLWLSC…ESLGMIPRSS (902 aa). 4 disulfide bridges follow: Cys-87–Cys-101, Cys-130–Cys-235, Cys-275–Cys-365, and Cys-439–Cys-442. N-linked (GlcNAc...) asparagine glycans are attached at residues Asn-91, Asn-143, and Asn-292. Asn-502, Asn-517, and Asn-565 each carry an N-linked (GlcNAc...) asparagine glycan. Intrachain disulfides connect Cys-617/Cys-724, Cys-737/Cys-919, Cys-753/Cys-786, and Cys-838/Cys-869. The N-linked (GlcNAc...) asparagine glycan is linked to Asn-749. Residue Asn-830 is glycosylated (N-linked (GlcNAc...) asparagine). 3 N-linked (GlcNAc...) asparagine glycosylation sites follow: Asn-888, Asn-915, and Asn-920. A helical transmembrane segment spans residues 938–958; it reads VYLVAALIFVLMLTFISILVL. Residues 959–985 lie on the Cytoplasmic side of the membrane; it reads SYFWYLKIYRQFIIEPLHKRPAKQKKN.

It belongs to the CATSPERD family. Component of the CatSper complex or CatSpermasome composed of the core pore-forming members CATSPER1, CATSPER2, CATSPER3 and CATSPER4 as well as auxiliary members CATSPERB, CATSPERG2, CATSPERD, CATSPERE, CATSPERZ, C2CD6/CATSPERT, SLCO6C1, TMEM249, TMEM262 and EFCAB9. HSPA1 may be an additional auxiliary complex member. The core complex members CATSPER1, CATSPER2, CATSPER3 and CATSPER4 form a heterotetrameric channel. The auxiliary CATSPERB, CATSPERG2, CATSPERD and CATSPERE subunits form a pavilion-like structure over the pore which stabilizes the complex through interactions with CATSPER4, CATSPER3, CATSPER1 and CATSPER2 respectively. SLCO6C1 interacts with CATSPERE and TMEM262/CATSPERH interacts with CATSPERB, further stabilizing the complex. C2CD6/CATSPERT interacts at least with CATSPERD and is required for targeting the CatSper complex in the flagellar membrane. In terms of tissue distribution, testis-specific.

The protein resides in the cell projection. The protein localises to the cilium. It localises to the flagellum membrane. Auxiliary component of the CatSper complex, a complex involved in sperm cell hyperactivation. Sperm cell hyperactivation is needed for sperm motility which is essential late in the preparation of sperm for fertilization. This Mus musculus (Mouse) protein is Cation channel sperm-associated auxiliary subunit epsilon.